The sequence spans 109 residues: Large ribosomal subunit protein uL22 (109 aa).

It belongs to the universal ribosomal protein uL22 family. Part of the 50S ribosomal subunit.

Functionally, this protein binds specifically to 23S rRNA; its binding is stimulated by other ribosomal proteins, e.g. L4, L17, and L20. It is important during the early stages of 50S assembly. It makes multiple contacts with different domains of the 23S rRNA in the assembled 50S subunit and ribosome. Its function is as follows. The globular domain of the protein is located near the polypeptide exit tunnel on the outside of the subunit, while an extended beta-hairpin is found that lines the wall of the exit tunnel in the center of the 70S ribosome. The protein is Large ribosomal subunit protein uL22 of Cupriavidus taiwanensis (strain DSM 17343 / BCRC 17206 / CCUG 44338 / CIP 107171 / LMG 19424 / R1) (Ralstonia taiwanensis (strain LMG 19424)).